The sequence spans 240 residues: uncharacterized protein (240 aa).

Helical transmembrane passes span 16–36 and 67–87; these read AVFF…YFIP and FITA…VIAM.

Its subcellular location is the cell membrane. This is an uncharacterized protein from Bacillus subtilis (strain 168).